Here is a 1141-residue protein sequence, read N- to C-terminus: DNA-directed RNA polymerase subunit beta (1141 aa).

The segment at Gly1117–Met1141 is disordered.

Belongs to the RNA polymerase beta chain family. In terms of assembly, the RNAP catalytic core consists of 2 alpha, 1 beta, 1 beta' and 1 omega subunit. When a sigma factor is associated with the core the holoenzyme is formed, which can initiate transcription.

The catalysed reaction is RNA(n) + a ribonucleoside 5'-triphosphate = RNA(n+1) + diphosphate. Its function is as follows. DNA-dependent RNA polymerase catalyzes the transcription of DNA into RNA using the four ribonucleoside triphosphates as substrates. The sequence is that of DNA-directed RNA polymerase subunit beta from Rubrobacter xylanophilus (strain DSM 9941 / JCM 11954 / NBRC 16129 / PRD-1).